Reading from the N-terminus, the 335-residue chain is Putative hydrogenase expression/formation protein MJ0676 (335 aa).

Belongs to the HypE family.

This chain is Putative hydrogenase expression/formation protein MJ0676, found in Methanocaldococcus jannaschii (strain ATCC 43067 / DSM 2661 / JAL-1 / JCM 10045 / NBRC 100440) (Methanococcus jannaschii).